We begin with the raw amino-acid sequence, 387 residues long: Erythronate-4-phosphate dehydrogenase (387 aa).

Serine 45 and threonine 67 together coordinate substrate. Aspartate 147 serves as a coordination point for NAD(+). The active site involves arginine 208. Aspartate 232 contacts NAD(+). Residue glutamate 237 is part of the active site. Histidine 254 acts as the Proton donor in catalysis. Residue glycine 257 coordinates NAD(+). Residue tyrosine 258 participates in substrate binding.

This sequence belongs to the D-isomer specific 2-hydroxyacid dehydrogenase family. PdxB subfamily. In terms of assembly, homodimer.

It is found in the cytoplasm. The catalysed reaction is 4-phospho-D-erythronate + NAD(+) = (R)-3-hydroxy-2-oxo-4-phosphooxybutanoate + NADH + H(+). The protein operates within cofactor biosynthesis; pyridoxine 5'-phosphate biosynthesis; pyridoxine 5'-phosphate from D-erythrose 4-phosphate: step 2/5. Its function is as follows. Catalyzes the oxidation of erythronate-4-phosphate to 3-hydroxy-2-oxo-4-phosphonooxybutanoate. In Shewanella violacea (strain JCM 10179 / CIP 106290 / LMG 19151 / DSS12), this protein is Erythronate-4-phosphate dehydrogenase.